Consider the following 318-residue polypeptide: Epithelial-stromal interaction protein 1 (318 aa).

Positions 1–60 (MNTRNRVVNSGLGASPASRPTRDPQDPSGRQGELSPVEDQREGLEAAPKGPSRESVVHAG) are disordered. Coiled coils occupy residues 73 to 188 (NINR…HQQY) and 240 to 280 (LKAE…HQTE).

As to expression, highly expressed in placenta, small intestine, spleen, kidney, thymus, liver, salivary gland and testes. Weakly expressed in breast, skeletal muscle and colon. Highly expressed in breast cancer upon interaction between tumor cells and stromal cells in vitro. Expressed in blood mononuclear cells from patients with systemic lupus erythematosus (SLE).

Plays a role in M1 macrophage polarization and is required for the proper regulation of gene expression during M1 versus M2 macrophage differentiation. Might play a role in RELA/p65 and STAT1 phosphorylation and nuclear localization upon activation of macrophages. This chain is Epithelial-stromal interaction protein 1 (EPSTI1), found in Homo sapiens (Human).